The primary structure comprises 244 residues: Phosphoadenosine 5'-phosphosulfate reductase (244 aa).

C239 acts as the Nucleophile; cysteine thiosulfonate intermediate in catalysis.

The protein belongs to the PAPS reductase family. CysH subfamily.

The protein resides in the cytoplasm. The catalysed reaction is [thioredoxin]-disulfide + sulfite + adenosine 3',5'-bisphosphate + 2 H(+) = [thioredoxin]-dithiol + 3'-phosphoadenylyl sulfate. Its pathway is sulfur metabolism; hydrogen sulfide biosynthesis; sulfite from sulfate: step 3/3. Functionally, catalyzes the formation of sulfite from phosphoadenosine 5'-phosphosulfate (PAPS) using thioredoxin as an electron donor. The chain is Phosphoadenosine 5'-phosphosulfate reductase from Escherichia coli O157:H7.